Consider the following 350-residue polypeptide: Phenylalanine--tRNA ligase alpha subunit (350 aa).

Mg(2+) is bound at residue E259.

It belongs to the class-II aminoacyl-tRNA synthetase family. Phe-tRNA synthetase alpha subunit type 1 subfamily. As to quaternary structure, tetramer of two alpha and two beta subunits. Mg(2+) is required as a cofactor.

Its subcellular location is the cytoplasm. It catalyses the reaction tRNA(Phe) + L-phenylalanine + ATP = L-phenylalanyl-tRNA(Phe) + AMP + diphosphate + H(+). In Rickettsia typhi (strain ATCC VR-144 / Wilmington), this protein is Phenylalanine--tRNA ligase alpha subunit.